Reading from the N-terminus, the 523-residue chain is Solute carrier family 35 member F5 (523 aa).

2 consecutive transmembrane segments (helical) span residues 69–89 (MALG…SSEL) and 101–121 (FFST…FIIW). S207 carries the phosphoserine modification. 8 helical membrane passes run 243–263 (ISFF…EALS), 268–288 (AIVN…AAVF), 296–316 (FTLS…LVNL), 327–347 (TIGS…IVMI), 361–381 (MFFG…FFLL), 395–415 (VVLM…EFLW), 420–440 (FLTS…LSII), and 452–472 (WLFF…TLLC). One can recognise an EamA domain in the interval 252–316 (FLANLSYQEA…SIGGVVLVNL (65 aa)).

It belongs to the SLC35F solute transporter family.

It localises to the membrane. Its function is as follows. Putative solute transporter. The sequence is that of Solute carrier family 35 member F5 (SLC35F5) from Pongo abelii (Sumatran orangutan).